A 431-amino-acid chain; its full sequence is Trigger factor (431 aa).

The region spanning 165–250 (GDTVVIDFDG…IHELKRKELP (86 aa)) is the PPIase FKBP-type domain.

The protein belongs to the FKBP-type PPIase family. Tig subfamily.

The protein resides in the cytoplasm. It carries out the reaction [protein]-peptidylproline (omega=180) = [protein]-peptidylproline (omega=0). Its function is as follows. Involved in protein export. Acts as a chaperone by maintaining the newly synthesized protein in an open conformation. Functions as a peptidyl-prolyl cis-trans isomerase. This chain is Trigger factor, found in Leuconostoc mesenteroides subsp. mesenteroides (strain ATCC 8293 / DSM 20343 / BCRC 11652 / CCM 1803 / JCM 6124 / NCDO 523 / NBRC 100496 / NCIMB 8023 / NCTC 12954 / NRRL B-1118 / 37Y).